We begin with the raw amino-acid sequence, 158 residues long: G-protein-signaling modulator 3 (158 aa).

Positions Met1 to Gly53 are disordered. Phosphoserine occurs at positions 33 and 37. The span at Ser33 to Gly42 shows a compositional bias: pro residues. Residues Thr43–Gly53 show a composition bias toward low complexity. A phosphoserine mark is found at Ser54 and Ser57. Position 60 is a phosphothreonine (Thr60). In terms of domain architecture, GoLoco 1 spans Thr60–Phe82. The tract at residues Gln78–Arg97 is disordered. The span at Lys86 to Pro96 shows a compositional bias: pro residues. GoLoco domains lie at Lys102–Pro124 and Gly130–Pro153.

Its subcellular location is the cytoplasm. Its function is as follows. Interacts with subunit of G(i) alpha proteins and regulates the activation of G(i) alpha proteins. This is G-protein-signaling modulator 3 (Gpsm3) from Rattus norvegicus (Rat).